Reading from the N-terminus, the 177-residue chain is Large ribosomal subunit protein uL6 (177 aa).

Belongs to the universal ribosomal protein uL6 family. In terms of assembly, part of the 50S ribosomal subunit.

In terms of biological role, this protein binds to the 23S rRNA, and is important in its secondary structure. It is located near the subunit interface in the base of the L7/L12 stalk, and near the tRNA binding site of the peptidyltransferase center. In Rickettsia bellii (strain OSU 85-389), this protein is Large ribosomal subunit protein uL6.